The chain runs to 226 residues: UPF0758 protein Sca_1264 (226 aa).

The region spanning 102-224 is the MPN domain; sequence KITSPQDAAD…YLSMVEGGYF (123 aa). Residues His173, His175, and Asp186 each contribute to the Zn(2+) site. The short motif at 173–186 is the JAMM motif element; sequence HNHPSGDVTPSKED.

It belongs to the UPF0758 family.

This is UPF0758 protein Sca_1264 from Staphylococcus carnosus (strain TM300).